The chain runs to 352 residues: Keratocan (352 aa).

A signal peptide spans 1–20 (MAGTICFIMWVLFITDTVWS). Positions 33–71 (DDWTIHDFECPMECFCPPSFPTALYCENRGLKEIPAIPS) constitute an LRRNT domain. Cystine bridges form between C42/C48 and C46/C58. 10 LRR repeats span residues 72–93 (RIWY…PFEN), 96–117 (QLRW…KGAL), 122–142 (KLLF…PLPR), 143–164 (SLEQ…TFSN), 167–180 (NLTL…KLVD), 193–213 (NLMQ…RLPA), 214–235 (NTMQ…YFNV), 238–258 (KVAF…PSRG), 263–282 (SILD…RISA), and 283–304 (HLQH…VICP). N93 carries N-linked (GlcNAc...) (keratan sulfate) asparagine glycosylation. N167 is a glycosylation site (N-linked (GlcNAc...) (keratan sulfate) asparagine). The N-linked (GlcNAc...) asparagine glycan is linked to N222. N298 is a glycosylation site (N-linked (GlcNAc...) asparagine). A disulfide bond links C303 and C343.

It belongs to the small leucine-rich proteoglycan (SLRP) family. SLRP class II subfamily. In terms of processing, binds keratan sulfate chains. As to expression, cornea (at protein level). Increased expression in the stroma of keratoconus corneas. Also detected in trachea, and in low levels, in intestine, skeletal muscle, ovary, lung and putamen.

It localises to the secreted. The protein resides in the extracellular space. The protein localises to the extracellular matrix. In terms of biological role, may be important in developing and maintaining corneal transparency and for the structure of the stromal matrix. This chain is Keratocan (KERA), found in Homo sapiens (Human).